Consider the following 31-residue polypeptide: Putative translational regulatory protein ArgL (31 aa).

Functionally, may serve a regulatory role in expression of downstream gene argF; in an argL-argF-lacZ fusion mutation of the start codon to a stop codon in argL increases expression of beta-galactosidase. This is Putative translational regulatory protein ArgL from Escherichia coli (strain K12).